An 871-amino-acid polypeptide reads, in one-letter code: DNA mismatch repair protein MutS (871 aa).

630-637 (GPNMGGKS) contacts ATP. The disordered stretch occupies residues 830–849 (KEEPESKSASPVEAALAGIN).

It belongs to the DNA mismatch repair MutS family.

In terms of biological role, this protein is involved in the repair of mismatches in DNA. It is possible that it carries out the mismatch recognition step. This protein has a weak ATPase activity. The polypeptide is DNA mismatch repair protein MutS (Verminephrobacter eiseniae (strain EF01-2)).